The chain runs to 379 residues: Cytochrome b (379 aa).

4 helical membrane passes run 33-53, 77-98, 113-133, and 178-198; these read FGSL…FLAM, WTIR…FIHV, WNVG…GYVL, and FFAL…IHLL. Heme b-binding residues include H83 and H97. H182 and H196 together coordinate heme b. A ubiquinone is bound at residue H201. A run of 4 helical transmembrane segments spans residues 226-246, 288-308, 320-340, and 347-367; these read TKDF…TLFY, LGGV…PLLQ, LSQF…WIGG, and FITI…LIMP.

This sequence belongs to the cytochrome b family. As to quaternary structure, the cytochrome bc1 complex contains 11 subunits: 3 respiratory subunits (MT-CYB, CYC1 and UQCRFS1), 2 core proteins (UQCRC1 and UQCRC2) and 6 low-molecular weight proteins (UQCRH/QCR6, UQCRB/QCR7, UQCRQ/QCR8, UQCR10/QCR9, UQCR11/QCR10 and a cleavage product of UQCRFS1). This cytochrome bc1 complex then forms a dimer. Requires heme b as cofactor.

The protein resides in the mitochondrion inner membrane. Component of the ubiquinol-cytochrome c reductase complex (complex III or cytochrome b-c1 complex) that is part of the mitochondrial respiratory chain. The b-c1 complex mediates electron transfer from ubiquinol to cytochrome c. Contributes to the generation of a proton gradient across the mitochondrial membrane that is then used for ATP synthesis. The polypeptide is Cytochrome b (MT-CYB) (Lepilemur edwardsi (Milne-Edwards's sportive lemur)).